The chain runs to 404 residues: Cysteine desulfurase IscS (404 aa).

Residues 75–76 (AT), Asn155, Gln183, and 203–205 (SSH) contribute to the pyridoxal 5'-phosphate site. N6-(pyridoxal phosphate)lysine is present on Lys206. Pyridoxal 5'-phosphate is bound at residue Thr243. Cys328 (cysteine persulfide intermediate) is an active-site residue. Cys328 provides a ligand contact to [2Fe-2S] cluster.

The protein belongs to the class-V pyridoxal-phosphate-dependent aminotransferase family. NifS/IscS subfamily. As to quaternary structure, homodimer. Forms a heterotetramer with IscU, interacts with other sulfur acceptors. Pyridoxal 5'-phosphate is required as a cofactor.

The protein localises to the cytoplasm. The catalysed reaction is (sulfur carrier)-H + L-cysteine = (sulfur carrier)-SH + L-alanine. The protein operates within cofactor biosynthesis; iron-sulfur cluster biosynthesis. Master enzyme that delivers sulfur to a number of partners involved in Fe-S cluster assembly, tRNA modification or cofactor biosynthesis. Catalyzes the removal of elemental sulfur atoms from cysteine to produce alanine. Functions as a sulfur delivery protein for Fe-S cluster synthesis onto IscU, an Fe-S scaffold assembly protein, as well as other S acceptor proteins. The sequence is that of Cysteine desulfurase IscS from Histophilus somni (strain 2336) (Haemophilus somnus).